Here is a 487-residue protein sequence, read N- to C-terminus: Serine/threonine-protein phosphatase 2A activator 1 (487 aa).

2 disordered regions span residues M1–T28 and G426–E487.

Belongs to the PTPA-type PPIase family.

The protein localises to the cytoplasm. Its subcellular location is the nucleus. It catalyses the reaction [protein]-peptidylproline (omega=180) = [protein]-peptidylproline (omega=0). Its function is as follows. PPIases accelerate the folding of proteins. It catalyzes the cis-trans isomerization of proline imidic peptide bonds in oligopeptides. Acts as a regulatory subunit for PP2A-like phosphatases modulating their activity or substrate specificity, probably by inducing a conformational change in the catalytic subunit, a direct target of the PPIase. Can reactivate inactive phosphatase PP2A-phosphatase methylesterase complexes (PP2Ai) in presence of ATP and Mg(2+) by dissociating the inactive form from the complex. The sequence is that of Serine/threonine-protein phosphatase 2A activator 1 (RRD1) from Mycosarcoma maydis (Corn smut fungus).